Here is a 322-residue protein sequence, read N- to C-terminus: Cytochrome c biogenesis protein CcsA (322 aa).

Helical transmembrane passes span 19–39 (NAIFCNLLLTMCLYWFSLIIV), 43–63 (LICNLAKFSAVNSNVILFFYL), 72–92 (FFPLSNLYESLMFLSCLLLFI), 104–124 (VIGALVLPLIVLVQGFASLSL), 150–170 (MMLSYATLLLGSLFSILYLVL), 230–250 (TIGIGFPFLTMGIISGAVWAN), 264–281 (TWALITWLIFASYLHARL), and 291–311 (AFLGSFGFFIVWVCYLGVNFL).

Belongs to the CcmF/CycK/Ccl1/NrfE/CcsA family. As to quaternary structure, may interact with Ccs1.

The protein localises to the plastid. It is found in the chloroplast thylakoid membrane. Its function is as follows. Required during biogenesis of c-type cytochromes (cytochrome c6 and cytochrome f) at the step of heme attachment. The sequence is that of Cytochrome c biogenesis protein CcsA from Heterosigma akashiwo (strain NIES-293 / 8280G21-1).